Here is a 623-residue protein sequence, read N- to C-terminus: Sulfite reductase [NADPH] flavoprotein alpha-component (623 aa).

The disordered stretch occupies residues 1 to 32 (MSFQKNEYSHKNVSEDNNGQGGNPPIASPLND). The 139-residue stretch at 87–225 (LTIIFASQTG…AAEEWRKNAL (139 aa)) folds into the Flavodoxin-like domain. Residues 93 to 98 (SQTGNA), 140 to 143 (STNG), and 176 to 185 (LGDSSYEFFC) contribute to the FMN site. One can recognise an FAD-binding FR-type domain in the interval 258 to 472 (QNPYTATLLT…VEHNNNFKLP (215 aa)). Residues threonine 346, alanine 380, 410-413 (RLYS), 428-430 (TVG), tyrosine 434, and 443-446 (GGAS) contribute to the FAD site. Residues 543–544 (SR), 549–553 (KVYVQ), and aspartate 585 each bind NADP(+). Tyrosine 623 serves as a coordination point for FAD.

This sequence belongs to the NADPH-dependent sulphite reductase flavoprotein subunit CysJ family. It in the N-terminal section; belongs to the flavodoxin family. The protein in the C-terminal section; belongs to the flavoprotein pyridine nucleotide cytochrome reductase family. Alpha(8)-beta(8). The alpha component is a flavoprotein, the beta component is a hemoprotein. The cofactor is FAD. FMN serves as cofactor.

The catalysed reaction is hydrogen sulfide + 3 NADP(+) + 3 H2O = sulfite + 3 NADPH + 4 H(+). It functions in the pathway sulfur metabolism; hydrogen sulfide biosynthesis; hydrogen sulfide from sulfite (NADPH route): step 1/1. Functionally, component of the sulfite reductase complex that catalyzes the 6-electron reduction of sulfite to sulfide. This is one of several activities required for the biosynthesis of L-cysteine from sulfate. The flavoprotein component catalyzes the electron flow from NADPH -&gt; FAD -&gt; FMN to the hemoprotein component. The polypeptide is Sulfite reductase [NADPH] flavoprotein alpha-component (Vibrio parahaemolyticus serotype O3:K6 (strain RIMD 2210633)).